A 346-amino-acid chain; its full sequence is Protein RecA (346 aa).

68–75 (GPESSGKT) is a binding site for ATP.

This sequence belongs to the RecA family.

The protein localises to the cytoplasm. Functionally, can catalyze the hydrolysis of ATP in the presence of single-stranded DNA, the ATP-dependent uptake of single-stranded DNA by duplex DNA, and the ATP-dependent hybridization of homologous single-stranded DNAs. It interacts with LexA causing its activation and leading to its autocatalytic cleavage. This is Protein RecA from Heliobacterium modesticaldum (strain ATCC 51547 / Ice1).